The chain runs to 1510 residues: Chromosome partition protein MukB (1510 aa).

Residues 6–30 (ELENEIELESDEVIMENENVEEIVD) are a coiled coil. 75–82 (GGNGAGKS) is a binding site for ATP. Coiled-coil stretches lie at residues 346 to 506 (QHRL…HKMS), 553 to 633 (QQTP…NLTA), 673 to 706 (MQSQ…RLSQ), 821 to 847 (RAAR…QIAF), 876 to 1064 (EELM…IQLQ), 1094 to 1149 (ERAR…RELV), and 1249 to 1305 (DAIE…QNIS). The tract at residues 707 to 824 (PDGSEDPRLN…EIPLFGRAAR (118 aa)) is flexible hinge.

This sequence belongs to the SMC family. MukB subfamily. Homodimerization via its hinge domain. Binds to DNA via its C-terminal region. Interacts, and probably forms a ternary complex, with MukE and MukF via its C-terminal region. The complex formation is stimulated by calcium or magnesium. Interacts with tubulin-related protein FtsZ.

It localises to the cytoplasm. Its subcellular location is the nucleoid. In terms of biological role, plays a central role in chromosome condensation, segregation and cell cycle progression. Functions as a homodimer, which is essential for chromosome partition. Involved in negative DNA supercoiling in vivo, and by this means organize and compact chromosomes. May achieve or facilitate chromosome segregation by condensation DNA from both sides of a centrally located replisome during cell division. This chain is Chromosome partition protein MukB, found in Haemophilus influenzae (strain 86-028NP).